The sequence spans 399 residues: Succinate--CoA ligase [ADP-forming] subunit beta (399 aa).

An ATP-grasp domain is found at 9–254 (KALLREFGVP…ESEEDAKEIE (246 aa)). Residues Lys46, 53-55 (GRG), Glu109, Ser112, and Glu117 contribute to the ATP site. Mg(2+) contacts are provided by Asn209 and Asp223. Substrate-binding positions include Asn274 and 331–333 (GIM).

It belongs to the succinate/malate CoA ligase beta subunit family. In terms of assembly, heterotetramer of two alpha and two beta subunits. The cofactor is Mg(2+).

The enzyme catalyses succinate + ATP + CoA = succinyl-CoA + ADP + phosphate. It catalyses the reaction GTP + succinate + CoA = succinyl-CoA + GDP + phosphate. It functions in the pathway carbohydrate metabolism; tricarboxylic acid cycle; succinate from succinyl-CoA (ligase route): step 1/1. Its function is as follows. Succinyl-CoA synthetase functions in the citric acid cycle (TCA), coupling the hydrolysis of succinyl-CoA to the synthesis of either ATP or GTP and thus represents the only step of substrate-level phosphorylation in the TCA. The beta subunit provides nucleotide specificity of the enzyme and binds the substrate succinate, while the binding sites for coenzyme A and phosphate are found in the alpha subunit. This is Succinate--CoA ligase [ADP-forming] subunit beta from Nitrobacter winogradskyi (strain ATCC 25391 / DSM 10237 / CIP 104748 / NCIMB 11846 / Nb-255).